Reading from the N-terminus, the 1377-residue chain is Dicer-like protein 2 (1377 aa).

The Helicase ATP-binding domain occupies 23–203; sequence MFEASLQENI…LSMIESNMNA (181 aa). Position 36–43 (36–43) interacts with ATP; the sequence is MDTGSGKT. Positions 144 to 147 match the DEAH box motif; sequence DEAH. In terms of domain architecture, Helicase C-terminal spans 367–544; that stretch reads KLEALISFLS…ALALETMAEV (178 aa). Residues 563–657 enclose the Dicer dsRNA-binding fold domain; the sequence is AVARLHHFCS…LPLTRKPELR (95 aa). RNase III domains are found at residues 916-1056 and 1090-1274; these read ATRL…MDGG and NDSL…VDSR. The Mg(2+) site is built by E1129, D1260, and E1263.

Belongs to the helicase family. Dicer subfamily. Mg(2+) serves as cofactor. The cofactor is Mn(2+).

Its function is as follows. Dicer-like endonuclease involved in cleaving double-stranded RNA in the RNA interference (RNAi) pathway. Produces 21 to 25 bp dsRNAs (siRNAs) which target the selective destruction of homologous RNAs leading to sequence-specific suppression of gene expression, called post-transcriptional gene silencing (PTGS). Part of a broad host defense response against viral infection and transposons. This Aspergillus terreus (strain NIH 2624 / FGSC A1156) protein is Dicer-like protein 2 (dcl2).